The sequence spans 186 residues: Translation initiation factor IF-3 (186 aa).

The protein belongs to the IF-3 family. In terms of assembly, monomer.

The protein localises to the cytoplasm. Its function is as follows. IF-3 binds to the 30S ribosomal subunit and shifts the equilibrium between 70S ribosomes and their 50S and 30S subunits in favor of the free subunits, thus enhancing the availability of 30S subunits on which protein synthesis initiation begins. The polypeptide is Translation initiation factor IF-3 (Chlamydia caviae (strain ATCC VR-813 / DSM 19441 / 03DC25 / GPIC) (Chlamydophila caviae)).